We begin with the raw amino-acid sequence, 126 residues long: Histone H2B (126 aa).

Positions 1 to 12 are enriched in low complexity; the sequence is MPEPAKSAPAPK. Residues 1–36 are disordered; the sequence is MPEPAKSAPAPKKGSKKAVTKTQKKGDKKRKKSRKE. An N6-acetyllysine mark is found at K6 and K13. Basic residues predominate over residues 13-34; the sequence is KGSKKAVTKTQKKGDKKRKKSR. At S15 the chain carries Phosphoserine. N6-acetyllysine occurs at positions 16 and 21. Residue K121 forms a Glycyl lysine isopeptide (Lys-Gly) (interchain with G-Cter in ubiquitin) linkage.

The protein belongs to the histone H2B family. As to quaternary structure, the nucleosome is a histone octamer containing two molecules each of H2A, H2B, H3 and H4 assembled in one H3-H4 heterotetramer and two H2A-H2B heterodimers. The octamer wraps approximately 147 bp of DNA. In terms of processing, monoubiquitination of Lys-121 by the RNF20/40 complex gives a specific tag for epigenetic transcriptional activation and is also prerequisite for histone H3 'Lys-4' and 'Lys-79' methylation. Phosphorylated on Ser-15 during apoptosis; which facilitates apoptotic chromatin condensation.

It localises to the nucleus. It is found in the chromosome. Its function is as follows. Core component of nucleosome. Nucleosomes wrap and compact DNA into chromatin, limiting DNA accessibility to the cellular machineries which require DNA as a template. Histones thereby play a central role in transcription regulation, DNA repair, DNA replication and chromosomal stability. DNA accessibility is regulated via a complex set of post-translational modifications of histones, also called histone code, and nucleosome remodeling. This chain is Histone H2B, found in Cairina moschata (Muscovy duck).